The chain runs to 115 residues: ESX-1 secretion-associated protein EspL (115 aa).

The protein is ESX-1 secretion-associated protein EspL of Mycobacterium tuberculosis (strain CDC 1551 / Oshkosh).